The following is a 557-amino-acid chain: Nucleolin 1 (557 aa).

Disordered stretches follow at residues 1–297, 376–398, and 474–557; these read MGKS…GGSK, GERG…GDGG, and LVVD…FGDE. Basic and acidic residues predominate over residues 49–63; that stretch reads QKEKAVKKVPKKVES. Composition is skewed to acidic residues over residues 64–74, 91–101, and 124–135; these read SDDSDSESEEE, ESSDDSSSDDE, and SSSDDDSSDEEV. Positions 174–184 are enriched in low complexity; that stretch reads AKIAKPAAKDS. Acidic residues predominate over residues 186-197; that stretch reads SSDDDSDEDSED. Positions 203-217 are enriched in low complexity; sequence KKAAPAAAKAASSSD. Residues 218–229 show a composition bias toward acidic residues; the sequence is SSDEDSDEESED. A compositionally biased stretch (basic and acidic residues) spans 230–247; sequence EKPAQKKADTKASKKSSS. The segment covering 249-263 has biased composition (acidic residues); the sequence is ESSESEEDESEDEEE. Residues 264 to 281 are compositionally biased toward basic and acidic residues; it reads TPKKKSSDVEMVDAEKSS. Residues 297–374 form the RRM 1 domain; it reads KTLFAANLSF…REIRLDIAQE (78 aa). Positions 401–481 constitute an RRM 2 domain; the sequence is KKIFVKGFDA…FYLVVDEPRP (81 aa). The segment covering 485 to 503 has biased composition (gly residues); that stretch reads SSGGGGFGRGNGRFGSGGG.

In terms of assembly, interacts with THAL in the nucleus. Expressed in roots, leaves, shoots and flowers.

It localises to the nucleus. Its subcellular location is the nucleolus. In terms of biological role, involved in pre-rRNA processing and ribosome assembly. Is associated with intranucleolar chromatin and pre-ribosomal particles and plays a role in controlling activation and repression of a specific subset of rRNA genes located in distinctive nucleolar organizer regions. Binds specifically rDNA chromatin and may be required to maintain rDNA chromatin structure, but is probably not required for the overall histone methylation status of 45S rRNA genes. Involved in leaf polarity establishment by functioning cooperatively with AS1 to repress abaxial genes ARF3, ARF4, KAN1, KAN2, YAB1 and YAB5, and the knox homeobox genes KNAT1, KNAT2, KNAT6, and STM to promote adaxial development in leaf primordia at shoot apical meristems at high temperatures. This Arabidopsis thaliana (Mouse-ear cress) protein is Nucleolin 1.